Here is an 83-residue protein sequence, read N- to C-terminus: Mu-theraphotoxin-Hhn2l (83 aa).

Residues 1–21 (MKASMFLALAGLVLLFVVGYA) form the signal peptide. Residues 22–48 (SESEEKEFPIELLSKIFAVDVFKGEER) constitute a propeptide that is removed on maturation. Intrachain disulfides connect C50-C65, C57-C70, and C64-C77. L81 carries the leucine amide modification.

This sequence belongs to the neurotoxin 10 (Hwtx-1) family. 15 (Hntx-3) subfamily. In terms of assembly, monomer. In terms of tissue distribution, expressed by the venom gland.

Its subcellular location is the secreted. Its function is as follows. Lethal neurotoxin. Selectively blocks tetrodotoxin-sensitive voltage-gated sodium channels (Nav). Does not affect tetrodotoxin-resistant voltage-gated sodium channels or calcium channels. This Cyriopagopus hainanus (Chinese bird spider) protein is Mu-theraphotoxin-Hhn2l.